A 278-amino-acid chain; its full sequence is Putative peptidase Cgl1093 (278 aa).

Residues Met1–Ala32 form the signal peptide. Residues Leu33–Gly236 form the Peptidase S1 domain. An intrachain disulfide couples Cys59 to Cys75. Residues His74, Asp123, and Ser189 each act as charge relay system in the active site.

This sequence belongs to the peptidase S1 family.

It localises to the secreted. The protein is Putative peptidase Cgl1093 of Corynebacterium glutamicum (strain ATCC 13032 / DSM 20300 / JCM 1318 / BCRC 11384 / CCUG 27702 / LMG 3730 / NBRC 12168 / NCIMB 10025 / NRRL B-2784 / 534).